The sequence spans 98 residues: NADH-ubiquinone oxidoreductase chain 4L (98 aa).

A run of 3 helical transmembrane segments spans residues 1–21, 29–49, and 61–81; these read MSLV…GLLM, SLLC…LMIL, and IILL…LVMV.

The protein belongs to the complex I subunit 4L family. In terms of assembly, core subunit of respiratory chain NADH dehydrogenase (Complex I) which is composed of 45 different subunits.

Its subcellular location is the mitochondrion inner membrane. It catalyses the reaction a ubiquinone + NADH + 5 H(+)(in) = a ubiquinol + NAD(+) + 4 H(+)(out). In terms of biological role, core subunit of the mitochondrial membrane respiratory chain NADH dehydrogenase (Complex I) which catalyzes electron transfer from NADH through the respiratory chain, using ubiquinone as an electron acceptor. Part of the enzyme membrane arm which is embedded in the lipid bilayer and involved in proton translocation. This Ovis aries (Sheep) protein is NADH-ubiquinone oxidoreductase chain 4L (MT-ND4L).